The following is a 62-amino-acid chain: Conotoxin Pn-B02 (62 aa).

An N-terminal signal peptide occupies residues 1–19; that stretch reads MRCLPVFIILLLLIASAPS. Positions 20–49 are excised as a propeptide; the sequence is FDALPKTEDNVPLSSFHDNLKRTRRIHLNI. Position 61 is an alanine amide (Ala-61).

This sequence belongs to the conotoxin T superfamily. Contains 2 disulfide bonds that can be either 'C1-C3, C2-C4' or 'C1-C4, C2-C3', since these disulfide connectivities have been observed for conotoxins with cysteine framework V (for examples, see AC P0DQQ7 and AC P81755). In terms of tissue distribution, expressed by the venom duct.

Its subcellular location is the secreted. The chain is Conotoxin Pn-B02 from Conus pennaceus (Feathered cone).